The chain runs to 211 residues: Putative truncated flagellar export/assembly protein LafU (211 aa).

The 119-residue stretch at 58–176 (LRVLIKDDQN…RIEIMVLTKS (119 aa)) folds into the OmpA-like domain.

It belongs to the MotB family.

This Escherichia coli (strain K12) protein is Putative truncated flagellar export/assembly protein LafU.